A 386-amino-acid chain; its full sequence is Histidine decarboxylase (386 aa).

H120 provides a ligand contact to substrate. K233 is subject to N6-(pyridoxal phosphate)lysine.

This sequence belongs to the group II decarboxylase family. As to quaternary structure, homotetramer. Requires pyridoxal 5'-phosphate as cofactor.

The catalysed reaction is L-histidine + H(+) = histamine + CO2. The chain is Histidine decarboxylase from Vibrio campbellii (strain ATCC BAA-1116).